A 242-amino-acid polypeptide reads, in one-letter code: Small ribosomal subunit protein uS2 (242 aa).

Belongs to the universal ribosomal protein uS2 family.

This Vibrio campbellii (strain ATCC BAA-1116) protein is Small ribosomal subunit protein uS2.